Here is a 417-residue protein sequence, read N- to C-terminus: Methyltransferase/ribosomally synthesized cyclic peptide dendrothelin A precursor dbihMA (417 aa).

The segment at 1–251 (MESSTQTKPG…GVSTFYIPPK (251 aa)) is methyltransferase domain. Catalysis depends on residues Arg72, Tyr76, and Tyr98. S-adenosyl-L-methionine contacts are provided by Tyr98, His100, Val103, Ala130, Gln172, Ala213, Ser244, and Thr245. Residues 252–378 (ARKDINTDII…WAIRCAMKNM (127 aa)) are clasp domain. The interval 379 to 399 (PSSLLEAASQSVEEASMNGFP) is precursor leader. Val401 and Val403 each carry N-methylvaline. Thr404 is modified (N-methylthreonine). Gly405 carries the N-methylglycine modification. Ile406 bears the N-methylisoleucine mark. Residue Val407 is modified to N-methylvaline. Residue Gly408 is modified to N-methylglycine. Ile410 carries the post-translational modification N-methylisoleucine. Gly411 carries the N-methylglycine modification. Position 413 is an N-methylvaline (Val413).

In the N-terminal section; belongs to the precorrin methyltransferase family. Homodimer. DbiMA automethylates at Val-401, Val-403, Thr-404, Gly-405, Ile-406, Val-407, Gly-408, Ile-410, Gly-411 and Val-413 before being processed by the prolyloligopeptidase dbiP which likely forms a peptidyl ester upon removal of the follower propeptide, which then undergoes macrocyclization with the N-terminus of the modified core peptide. Peptide backbone alpha-N-methylations change the physicochemical properties of amide bonds to provide structural constraints and other favorable characteristics including biological membrane permeability to peptides.

The protein operates within mycotoxin biosynthesis. Fusion protein of the methyltransferase dbiM and the dendrothelin core peptide; part of the gene cluster that mediates the biosynthesis of dendrothelin A, a highly methylated cyclic dodecapeptide showing slight nematodicidal activity. Dendrothelin A derives from the C-terminus of the dbiMA protein, and it is the dbiMA protein that methylates its own C-terminus using S-adenosyl methionine (SAM). The C-terminus is subsequently cleaved off and macrocyclized by the prolyloligopeptidase dbiP to give the final product. This is Methyltransferase/ribosomally synthesized cyclic peptide dendrothelin A precursor dbihMA from Dendrothele bispora (strain CBS 962.96).